The following is a 412-amino-acid chain: Phosphoglycerate kinase (412 aa).

Residues 24 to 26 (DLN), Arg44, 67 to 70 (HLGR), Arg126, and Arg170 contribute to the substrate site. Residues Lys220, Gly308, Glu339, and 368–371 (GGDS) each bind ATP.

Belongs to the phosphoglycerate kinase family. As to quaternary structure, monomer.

It is found in the cytoplasm. It catalyses the reaction (2R)-3-phosphoglycerate + ATP = (2R)-3-phospho-glyceroyl phosphate + ADP. It functions in the pathway carbohydrate degradation; glycolysis; pyruvate from D-glyceraldehyde 3-phosphate: step 2/5. The sequence is that of Phosphoglycerate kinase from Mycobacteroides abscessus (strain ATCC 19977 / DSM 44196 / CCUG 20993 / CIP 104536 / JCM 13569 / NCTC 13031 / TMC 1543 / L948) (Mycobacterium abscessus).